The primary structure comprises 252 residues: Chitooligosaccharide deacetylase (252 aa).

Positions 61 and 125 each coordinate Mg(2+).

This sequence belongs to the YdjC deacetylase family. ChbG subfamily. As to quaternary structure, homodimer. Mg(2+) is required as a cofactor.

It localises to the cytoplasm. The enzyme catalyses N,N'-diacetylchitobiose + H2O = N-acetyl-beta-D-glucosaminyl-(1-&gt;4)-D-glucosamine + acetate. It catalyses the reaction diacetylchitobiose-6'-phosphate + H2O = N'-monoacetylchitobiose-6'-phosphate + acetate. The protein operates within glycan degradation; chitin degradation. Its function is as follows. Involved in the degradation of chitin. ChbG is essential for growth on the acetylated chitooligosaccharides chitobiose and chitotriose but is dispensable for growth on cellobiose and chitosan dimer, the deacetylated form of chitobiose. Deacetylation of chitobiose-6-P and chitotriose-6-P is necessary for both the activation of the chb promoter by the regulatory protein ChbR and the hydrolysis of phosphorylated beta-glucosides by the phospho-beta-glucosidase ChbF. Catalyzes the removal of only one acetyl group from chitobiose-6-P to yield monoacetylchitobiose-6-P, the inducer of ChbR and the substrate of ChbF. In Salmonella typhi, this protein is Chitooligosaccharide deacetylase.